Consider the following 426-residue polypeptide: Glutamate-1-semialdehyde 2,1-aminomutase (426 aa).

Residue lysine 265 is modified to N6-(pyridoxal phosphate)lysine.

This sequence belongs to the class-III pyridoxal-phosphate-dependent aminotransferase family. HemL subfamily. In terms of assembly, homodimer. Pyridoxal 5'-phosphate serves as cofactor.

The protein localises to the cytoplasm. It carries out the reaction (S)-4-amino-5-oxopentanoate = 5-aminolevulinate. It functions in the pathway porphyrin-containing compound metabolism; protoporphyrin-IX biosynthesis; 5-aminolevulinate from L-glutamyl-tRNA(Glu): step 2/2. The chain is Glutamate-1-semialdehyde 2,1-aminomutase from Yersinia pseudotuberculosis serotype O:1b (strain IP 31758).